A 213-amino-acid polypeptide reads, in one-letter code: Probable glutathione S-transferase DHAR1, cytosolic (213 aa).

Residues K8 and D19 each coordinate glutathione. Residues K8 and D19 each coordinate L-ascorbate. The 80-residue stretch at 10–89 folds into the GST N-terminal domain; sequence AVGHPDTLGD…VIEEKYPTPS (80 aa). The active-site Nucleophile is the C20. Positions 47, 60, 74, 160, and 207 each coordinate glutathione. The GST C-terminal domain occupies 73-213; sequence DSDVITQVIE…IAGWAPKVNA (141 aa). K210 contributes to the L-ascorbate binding site.

It belongs to the GST superfamily. DHAR family. Monomer.

It localises to the cytoplasm. Its subcellular location is the cytosol. The enzyme catalyses RX + glutathione = an S-substituted glutathione + a halide anion + H(+). It carries out the reaction L-dehydroascorbate + 2 glutathione = glutathione disulfide + L-ascorbate. Involved in ascorbate homeostasis. Maintains redox pools of ascorbate by recycling dihydroascorbate (DHA) to ascorbate. Involved in scavenging reactive oxygen species (ROS) under oxidative stresses. Possesses dehydroascorbate reductase (DHAR) activity in vitro. May function via a ping-pong reaction mechanism with an electron transfer at the active site. Possesses chaperone-like activity in vitro. The polypeptide is Probable glutathione S-transferase DHAR1, cytosolic (Oryza sativa subsp. japonica (Rice)).